We begin with the raw amino-acid sequence, 2974 residues long: Mediator of RNA polymerase II transcription subunit 13 (2974 aa).

Basic and acidic residues-rich tracts occupy residues E284–E299, M340–V367, R374–D390, and S624–P633. 12 disordered regions span residues E284–T309, M340–D394, S624–V654, F677–I749, L764–E801, P1032–E1063, G1099–P1134, L1140–T1159, T1281–Y1342, Q1416–A1486, E2052–A2078, and Q2247–M2309. Positions K351 to D396 form a coiled coil. 2 stretches are compositionally biased toward basic residues: residues Y634–V654 and F677–P688. Over residues P689 to D717 the composition is skewed to basic and acidic residues. Residues S1035 to R1048 are compositionally biased toward basic and acidic residues. Polar residues-rich tracts occupy residues I1122–P1134 and L1140–S1149. 2 stretches are compositionally biased toward pro residues: residues R1284–M1299 and P1326–P1340. Polar residues predominate over residues I1443–N1464. Over residues A1473 to A1486 the composition is skewed to low complexity. Over residues S2064 to N2073 the composition is skewed to polar residues. Residues A2220 to A2301 are a coiled coil. Basic and acidic residues-rich tracts occupy residues Q2247–E2258 and E2281–E2292. The mediates transcriptional repression stretch occupies residues W2347–V2974.

It belongs to the Mediator complex subunit 13 family. In terms of assembly, component of the Mediator complex.

The protein localises to the nucleus. In terms of biological role, component of the Mediator complex, a coactivator involved in regulated gene transcription of nearly all RNA polymerase II-dependent genes. Mediator functions as a bridge to convey information from gene-specific regulatory proteins to the basal RNA polymerase II transcription machinery. Mediator is recruited to promoters by direct interactions with regulatory proteins and serves as a scaffold for the assembly of a functional preinitiation complex with RNA polymerase II and the general transcription factors. This chain is Mediator of RNA polymerase II transcription subunit 13 (let-19), found in Caenorhabditis briggsae.